The following is a 378-amino-acid chain: Deoxyguanosinetriphosphate triphosphohydrolase-like protein (378 aa).

A disordered region spans residues 1-28 (MLAPFACQPGESRGRQKPESMSTFRSPF). Residues 62–198 (RLTHSIEVAQ…AAIADDVAYS (137 aa)) enclose the HD domain.

The protein belongs to the dGTPase family. Type 2 subfamily.

In Cereibacter sphaeroides (strain ATCC 17029 / ATH 2.4.9) (Rhodobacter sphaeroides), this protein is Deoxyguanosinetriphosphate triphosphohydrolase-like protein.